A 391-amino-acid chain; its full sequence is NAD(P)H-quinone oxidoreductase subunit H, chloroplastic (391 aa).

Belongs to the complex I 49 kDa subunit family. As to quaternary structure, NDH is composed of at least 16 different subunits, 5 of which are encoded in the nucleus.

The protein resides in the plastid. It localises to the chloroplast thylakoid membrane. It catalyses the reaction a plastoquinone + NADH + (n+1) H(+)(in) = a plastoquinol + NAD(+) + n H(+)(out). It carries out the reaction a plastoquinone + NADPH + (n+1) H(+)(in) = a plastoquinol + NADP(+) + n H(+)(out). Its function is as follows. NDH shuttles electrons from NAD(P)H:plastoquinone, via FMN and iron-sulfur (Fe-S) centers, to quinones in the photosynthetic chain and possibly in a chloroplast respiratory chain. The immediate electron acceptor for the enzyme in this species is believed to be plastoquinone. Couples the redox reaction to proton translocation, and thus conserves the redox energy in a proton gradient. The polypeptide is NAD(P)H-quinone oxidoreductase subunit H, chloroplastic (Mesostigma viride (Green alga)).